The chain runs to 1154 residues: MLRRKIQTYLSRSHIRRGLCGLRFFQTQRLHTDYMPIEAYEPYKNELKSKIGKDFIIDLSYKSGTASLFEACVYNGDFLRSKQLLKSFIDHNKGDKILLPMINLYIREIIQRGSFELTDVLSNAKELLQQARLNGDSLTYALLCQASLNPTQRQLGLPVLHELIHNWRSANGKVIDILMHESVFSPEEVKLIMDQLNIPINNFTPSQLQLLGITNSTIVGESENGKDQNGDSSLKEKQPDVETTVTKSANLNALRSSLSSLLTESIDLPIDEVSLEFGNQGDTFNLARQKLLEKSAILSAAEVWKSEHESVLNRGNLQVPKNVSSLFYSWYVQLEQLFKEEISLIDDLALNESLDKKNDRLIYGPFLKLLSSKKLAALTIMEVAQLSTNPRYDRGARVTTLLGGLGRSFEREFLSEQIQRQEKNKSYKDKKRLKELFNDPRKFRQAVKNLRLSNTRDNIVLNPSVDSWPSAIVMKVGSVALCLLLSVAKIEVTAKDLSTGGILKQEVAAFVHTYQYSNGRKVGMIVPHVEFYKLLSRDIEKPHLHPQLLPMLVTPKPWTSWIDGGYYYSRQPLVRLKGALEQVDYLMKASENGQLDELFKAVSSLGKVSWRINQRLFNVLIRIWNSGEKFLSIPPREVKCDMPPYPKNSINPRDKVIWHTRRKELAALKTGAHSQRCDFNYKLEIARAFLNEKFYFPHSLDFRGRAYPLSSHLHHVSNDVCRGLLEFSTGKPLGPKGLNWLKVHLANLFGISKKDFATRQAFVDDNMQEVFDSADRPLDGNKWWSKADDPFQALAACFEIAEAVRSGDHESYISHIPIQQDGTCNGLQHYAALGGDIEGAKQVNLWPSDHPSDVYEAVAEIVRGFLKKDAEAGDEMANFLKDKVTRSVVKPTVMTNVYGVTYVGARKQISEKLENIDGMEKLKVADYANYLTKKVFEALRSLFTQAHEIQDWLSACCNLITHSLPADYIKEGIKDELTPVVWTTLLNLPIVQPYRNYKSRQIRTNLQTVFIEERDRTATVQPHKQATAFPPNFIHSLDATHMFMTCLKCSEQNINFAAVHDSYWTHACDVDQMNSLLREAFVLLHSNNIMERLKQEFEERYKGFLVSKKAIKANDEDLKAKFGNKSYIPLEFPPLPARGALDLKKVLESKYFFS.

Residues methionine 1 to leucine 30 constitute a mitochondrion transit peptide. Residues glutamate 221–threonine 243 form a disordered region. A compositionally biased stretch (basic and acidic residues) spans glutamate 223 to aspartate 240. Catalysis depends on residues aspartate 821, lysine 890, and aspartate 1061.

The protein belongs to the phage and mitochondrial RNA polymerase family.

It is found in the mitochondrion. The catalysed reaction is RNA(n) + a ribonucleoside 5'-triphosphate = RNA(n+1) + diphosphate. In terms of biological role, DNA-dependent RNA polymerase catalyzes the transcription of DNA into RNA using the four ribonucleoside triphosphates as substrates. Combines in the mitochondrion with mitochondrial transcription factor mtf1 as a holoenzyme to recognize and initiate transcription at the core mitochondrial promoters. The sequence is that of DNA-directed RNA polymerase, mitochondrial (rpo41) from Schizosaccharomyces pombe (strain 972 / ATCC 24843) (Fission yeast).